The following is a 395-amino-acid chain: S-adenosylmethionine synthase (395 aa).

Histidine 16 lines the ATP pocket. Residue aspartate 18 participates in Mg(2+) binding. Glutamate 44 serves as a coordination point for K(+). Residues glutamate 57 and glutamine 100 each coordinate L-methionine. The segment at 100 to 110 (QSPDIAQGVDR) is flexible loop. ATP is bound by residues 167–169 (DAK), 233–234 (RF), aspartate 242, 248–249 (RK), alanine 265, and lysine 269. Aspartate 242 contributes to the L-methionine binding site. An L-methionine-binding site is contributed by lysine 273.

Belongs to the AdoMet synthase family. In terms of assembly, homotetramer; dimer of dimers. The cofactor is Mg(2+). Requires K(+) as cofactor.

It localises to the cytoplasm. The catalysed reaction is L-methionine + ATP + H2O = S-adenosyl-L-methionine + phosphate + diphosphate. It functions in the pathway amino-acid biosynthesis; S-adenosyl-L-methionine biosynthesis; S-adenosyl-L-methionine from L-methionine: step 1/1. Catalyzes the formation of S-adenosylmethionine (AdoMet) from methionine and ATP. The overall synthetic reaction is composed of two sequential steps, AdoMet formation and the subsequent tripolyphosphate hydrolysis which occurs prior to release of AdoMet from the enzyme. The sequence is that of S-adenosylmethionine synthase from Burkholderia lata (strain ATCC 17760 / DSM 23089 / LMG 22485 / NCIMB 9086 / R18194 / 383).